The sequence spans 242 residues: Ribonuclease PH (242 aa).

Phosphate-binding positions include Arg-90 and 128–130 (GTR).

Belongs to the RNase PH family. Homohexameric ring arranged as a trimer of dimers.

The enzyme catalyses tRNA(n+1) + phosphate = tRNA(n) + a ribonucleoside 5'-diphosphate. Its function is as follows. Phosphorolytic 3'-5' exoribonuclease that plays an important role in tRNA 3'-end maturation. Removes nucleotide residues following the 3'-CCA terminus of tRNAs; can also add nucleotides to the ends of RNA molecules by using nucleoside diphosphates as substrates, but this may not be physiologically important. Probably plays a role in initiation of 16S rRNA degradation (leading to ribosome degradation) during starvation. The polypeptide is Ribonuclease PH (Nocardioides sp. (strain ATCC BAA-499 / JS614)).